A 753-amino-acid polypeptide reads, in one-letter code: RNA-directed RNA polymerase catalytic subunit (753 aa).

Residues 52–82 are disordered; sequence KGKWTTNTETGAPQLNPIDGPLPEDNEPSGY. Residues 55–64 are compositionally biased toward polar residues; sequence WTTNTETGAP. 2 consecutive short sequence motifs (nuclear localization signal) follow at residues 187 to 195 and 203 to 216; these read RKRRVRDNM and RTIG…NKKS. A promoter-binding site region spans residues 249 to 256; that stretch reads RGFVYFVE. The region spanning 286–483 is the RdRp catalytic domain; that stretch reads VRKMMTNSQD…GINMSKKKSY (198 aa).

The protein belongs to the influenza viruses polymerase PB1 family. As to quaternary structure, influenza RNA polymerase is composed of three subunits: PB1, PB2 and PA. Interacts (via N-terminus) with PA (via C-terminus). Interacts (via C-terminus) with PB2 (via N-terminus); this interaction is essential for transcription initiation. Phosphorylated by host PRKCA.

Its subcellular location is the host nucleus. The protein resides in the host cytoplasm. It carries out the reaction RNA(n) + a ribonucleoside 5'-triphosphate = RNA(n+1) + diphosphate. In terms of biological role, RNA-dependent RNA polymerase which is responsible for replication and transcription of virus RNA segments. The transcription of viral mRNAs occurs by a unique mechanism called cap-snatching. 5' methylated caps of cellular mRNAs are cleaved after 10-13 nucleotides by PA. In turn, these short capped RNAs are used as primers by PB1 for transcription of viral mRNAs. During virus replication, PB1 initiates RNA synthesis and copy vRNA into complementary RNA (cRNA) which in turn serves as a template for the production of more vRNAs. This is RNA-directed RNA polymerase catalytic subunit from Influenza A virus (strain A/Chicken/Hong Kong/96.1/2002 H5N1 genotype Y).